A 406-amino-acid chain; its full sequence is Phosphopentomutase (406 aa).

Residues Asp10, Asp305, His310, Asp346, His347, and His358 each contribute to the Mn(2+) site.

The protein belongs to the phosphopentomutase family. Requires Mn(2+) as cofactor.

Its subcellular location is the cytoplasm. The enzyme catalyses 2-deoxy-alpha-D-ribose 1-phosphate = 2-deoxy-D-ribose 5-phosphate. It catalyses the reaction alpha-D-ribose 1-phosphate = D-ribose 5-phosphate. It participates in carbohydrate degradation; 2-deoxy-D-ribose 1-phosphate degradation; D-glyceraldehyde 3-phosphate and acetaldehyde from 2-deoxy-alpha-D-ribose 1-phosphate: step 1/2. In terms of biological role, isomerase that catalyzes the conversion of deoxy-ribose 1-phosphate (dRib-1-P) and ribose 1-phosphate (Rib-1-P) to deoxy-ribose 5-phosphate (dRib-5-P) and ribose 5-phosphate (Rib-5-P), respectively. This Vibrio vulnificus (strain CMCP6) protein is Phosphopentomutase.